A 354-amino-acid chain; its full sequence is Histidinol-phosphate aminotransferase 1 (354 aa).

K209 bears the N6-(pyridoxal phosphate)lysine mark.

The protein belongs to the class-II pyridoxal-phosphate-dependent aminotransferase family. Histidinol-phosphate aminotransferase subfamily. In terms of assembly, homodimer. The cofactor is pyridoxal 5'-phosphate.

It catalyses the reaction L-histidinol phosphate + 2-oxoglutarate = 3-(imidazol-4-yl)-2-oxopropyl phosphate + L-glutamate. The protein operates within amino-acid biosynthesis; L-histidine biosynthesis; L-histidine from 5-phospho-alpha-D-ribose 1-diphosphate: step 7/9. The protein is Histidinol-phosphate aminotransferase 1 (hisC1) of Oceanobacillus iheyensis (strain DSM 14371 / CIP 107618 / JCM 11309 / KCTC 3954 / HTE831).